A 665-amino-acid polypeptide reads, in one-letter code: LisH domain-containing protein ARMC9 (665 aa).

Residues 7–39 (HESELLGLVKEYLDFAEFEDTLKTFSKECKIKG) enclose the LisH domain. Positions 201 to 235 (ENGQSNKEMLQQLHQQLVEAERRSMTYLKRYNKIQ) form a coiled coil. Ser-582 carries the post-translational modification Phosphoserine. A disordered region spans residues 642 to 665 (VQWSGDEPLQRPVTPGGHRNGYPV).

As to quaternary structure, interacts with TOGARAM1, CCDC66, CEP104, CSPP1 and CEP290. Interacts with NDUFAF2.

The protein resides in the cytoplasm. It localises to the cytoskeleton. Its subcellular location is the cilium basal body. The protein localises to the cell projection. It is found in the cilium. The protein resides in the microtubule organizing center. It localises to the centrosome. Its subcellular location is the centriole. Involved in ciliogenesis. It is required for appropriate acetylation and polyglutamylation of ciliary microtubules, and regulation of cilium length. Acts as a positive regulator of hedgehog (Hh)signaling. May participate in the trafficking and/or retention of GLI2 and GLI3 proteins at the ciliary tip. This Pongo abelii (Sumatran orangutan) protein is LisH domain-containing protein ARMC9 (ARMC9).